The chain runs to 287 residues: Prepilin leader peptidase/N-methyltransferase (287 aa).

A helical transmembrane segment spans residues 12–32; the sequence is FMYLVVGLFSLAVGSLLNVII. The Zn(2+) site is built by cysteine 71, cysteine 74, cysteine 96, and cysteine 99. The next 5 membrane-spanning stretches (helical) occupy residues 127-147, 158-178, 182-202, 215-235, and 259-279; these read FTIQ…LVFI, LTLG…FVSL, VLSC…FYLM, LFAA…LLIS, and PFGP…DSII.

The protein belongs to the peptidase A24 family. Zn(2+) is required as a cofactor.

It is found in the cell inner membrane. It catalyses the reaction Typically cleaves a -Gly-|-Phe- bond to release an N-terminal, basic peptide of 5-8 residues from type IV prepilin, and then N-methylates the new N-terminal amino group, the methyl donor being S-adenosyl-L-methionine.. Its function is as follows. Plays an essential role in type IV pili and type II pseudopili formation by proteolytically removing the leader sequence from substrate proteins and subsequently monomethylating the alpha-amino group of the newly exposed N-terminal phenylalanine. The sequence is that of Prepilin leader peptidase/N-methyltransferase (pilD) from Legionella pneumophila.